A 406-amino-acid polypeptide reads, in one-letter code: Probable peptidoglycan glycosyltransferase FtsW (406 aa).

9 helical membrane-spanning segments follow: residues 22 to 42 (LWFV…VASA), 56 to 76 (FFMG…FMML), 86 to 106 (WGIL…VPGI), 116 to 136 (WINL…CMVV), 153 to 173 (LIGF…LLME), 186 to 206 (VIAL…IVIM), 280 to 300 (IWVE…FALM), 318 to 338 (FAGY…IINV), and 352 to 372 (LPLI…LFVV). Positions 383-397 (SKGGESEERKRKSDE) are enriched in basic and acidic residues. Residues 383–406 (SKGGESEERKRKSDESIDDGEALA) form a disordered region.

Belongs to the SEDS family. FtsW subfamily.

The protein localises to the cell inner membrane. The enzyme catalyses [GlcNAc-(1-&gt;4)-Mur2Ac(oyl-L-Ala-gamma-D-Glu-L-Lys-D-Ala-D-Ala)](n)-di-trans,octa-cis-undecaprenyl diphosphate + beta-D-GlcNAc-(1-&gt;4)-Mur2Ac(oyl-L-Ala-gamma-D-Glu-L-Lys-D-Ala-D-Ala)-di-trans,octa-cis-undecaprenyl diphosphate = [GlcNAc-(1-&gt;4)-Mur2Ac(oyl-L-Ala-gamma-D-Glu-L-Lys-D-Ala-D-Ala)](n+1)-di-trans,octa-cis-undecaprenyl diphosphate + di-trans,octa-cis-undecaprenyl diphosphate + H(+). The protein operates within cell wall biogenesis; peptidoglycan biosynthesis. Its function is as follows. Peptidoglycan polymerase that is essential for cell division. This chain is Probable peptidoglycan glycosyltransferase FtsW, found in Marinomonas mediterranea (strain ATCC 700492 / JCM 21426 / NBRC 103028 / MMB-1).